A 284-amino-acid chain; its full sequence is Bifunctional protein FolD (284 aa).

NADP(+) is bound by residues 166-168 and Ile-232; that span reads GAS.

The protein belongs to the tetrahydrofolate dehydrogenase/cyclohydrolase family. Homodimer.

The catalysed reaction is (6R)-5,10-methylene-5,6,7,8-tetrahydrofolate + NADP(+) = (6R)-5,10-methenyltetrahydrofolate + NADPH. It carries out the reaction (6R)-5,10-methenyltetrahydrofolate + H2O = (6R)-10-formyltetrahydrofolate + H(+). It participates in one-carbon metabolism; tetrahydrofolate interconversion. In terms of biological role, catalyzes the oxidation of 5,10-methylenetetrahydrofolate to 5,10-methenyltetrahydrofolate and then the hydrolysis of 5,10-methenyltetrahydrofolate to 10-formyltetrahydrofolate. The sequence is that of Bifunctional protein FolD from Stutzerimonas stutzeri (strain A1501) (Pseudomonas stutzeri).